We begin with the raw amino-acid sequence, 814 residues long: Flagellar radial spoke protein 1 (814 aa).

Arg-243 is modified (asymmetric dimethylarginine). Residues 283–346 (VQSISTGNRE…PPPPAPKVDP (64 aa)) form a disordered region. Positions 303–329 (PEEDEEEEKEEEKEEPEEGEEGEEGEG) are enriched in acidic residues. Position 428 is an asymmetric dimethylarginine (Arg-428). 6 MORN repeats span residues 577–597 (YFGSYADDVKHGPGLYAFATG), 600–622 (YAGEYAGGKRHGRGVMVFPDGGT), 623–645 (YVGEFVADKFEGQGQYRYPDGSV), 646–662 (YTGSWAAGQKHGPGVYW), 671–685 (GEWKKGLLVGKGTYE), and 691–707 (FEGEFVRGMPAGTATYT). The interval 739–769 (GIPPGSGDEPQLDEEGQPIEDTDKPPLPAHP) is disordered. Over residues 748 to 758 (PQLDEEGQPIE) the composition is skewed to acidic residues.

In terms of processing, asymmetrically dimethylated at Arg-243 and Arg-428 during flagellum resorption. Probably methylated by PRMT1.

The protein localises to the cytoplasm. Its subcellular location is the cytoskeleton. It is found in the flagellum axoneme. Its function is as follows. Flagellar radial spokes contribute to the regulation of dynein arm activity and thus the pattern of flagellar bending. They consist of a thin stalk, which is attached to the a subfiber of the outer doublet microtubule, and a bulbous head, which is attached to the stalk and appears to interact with the projections from the central pair of microtubules. The sequence is that of Flagellar radial spoke protein 1 from Chlamydomonas reinhardtii (Chlamydomonas smithii).